The primary structure comprises 382 residues: Chaperone protein DnaJ (382 aa).

The J domain maps to Asp-5–Gly-70. Residues Gly-134–Lys-212 form a CR-type zinc finger. Cys-147, Cys-150, Cys-164, Cys-167, Cys-186, Cys-189, Cys-200, and Cys-203 together coordinate Zn(2+). CXXCXGXG motif repeat units follow at residues Cys-147–Gly-154, Cys-164–Gly-171, Cys-186–Gly-193, and Cys-200–Gly-207.

The protein belongs to the DnaJ family. In terms of assembly, homodimer. Requires Zn(2+) as cofactor.

The protein resides in the cytoplasm. Participates actively in the response to hyperosmotic and heat shock by preventing the aggregation of stress-denatured proteins and by disaggregating proteins, also in an autonomous, DnaK-independent fashion. Unfolded proteins bind initially to DnaJ; upon interaction with the DnaJ-bound protein, DnaK hydrolyzes its bound ATP, resulting in the formation of a stable complex. GrpE releases ADP from DnaK; ATP binding to DnaK triggers the release of the substrate protein, thus completing the reaction cycle. Several rounds of ATP-dependent interactions between DnaJ, DnaK and GrpE are required for fully efficient folding. Also involved, together with DnaK and GrpE, in the DNA replication of plasmids through activation of initiation proteins. In Haemophilus influenzae (strain ATCC 51907 / DSM 11121 / KW20 / Rd), this protein is Chaperone protein DnaJ.